The following is a 151-amino-acid chain: MADDEVKPIVRIADVDLDGHKKVPYALTGIKGIGIRMAYAICRELGLDEEKKLGELSDEEIERIEEEIKKLSEGESNIPSWMYNRQKDYETGEDMHLVGAELEMTVKQDIDRLKKIRAYRGIRHELGLPVRGQRTKSSFRRGRTVGVKKKQ.

The tract at residues 131-151 (RGQRTKSSFRRGRTVGVKKKQ) is disordered. A compositionally biased stretch (basic residues) spans 133 to 151 (QRTKSSFRRGRTVGVKKKQ).

The protein belongs to the universal ribosomal protein uS13 family. In terms of assembly, part of the 30S ribosomal subunit. Forms a loose heterodimer with protein S19. Forms two bridges to the 50S subunit in the 70S ribosome.

Located at the top of the head of the 30S subunit, it contacts several helices of the 16S rRNA. In the 70S ribosome it contacts the 23S rRNA (bridge B1a) and protein L5 of the 50S subunit (bridge B1b), connecting the 2 subunits; these bridges are implicated in subunit movement. The chain is Small ribosomal subunit protein uS13 from Methanopyrus kandleri (strain AV19 / DSM 6324 / JCM 9639 / NBRC 100938).